A 273-amino-acid chain; its full sequence is Formamidopyrimidine-DNA glycosylase (273 aa).

Pro2 acts as the Schiff-base intermediate with DNA in catalysis. Glu3 serves as the catalytic Proton donor. Lys57 (proton donor; for beta-elimination activity) is an active-site residue. DNA is bound by residues His91, Arg110, and Lys151. Residues 236-270 (QVYGRKDEACNDCGTIIEAKVIGQRNSYFCPHCQM) form an FPG-type zinc finger. The active-site Proton donor; for delta-elimination activity is the Arg260.

Belongs to the FPG family. As to quaternary structure, monomer. Requires Zn(2+) as cofactor.

The enzyme catalyses Hydrolysis of DNA containing ring-opened 7-methylguanine residues, releasing 2,6-diamino-4-hydroxy-5-(N-methyl)formamidopyrimidine.. It carries out the reaction 2'-deoxyribonucleotide-(2'-deoxyribose 5'-phosphate)-2'-deoxyribonucleotide-DNA = a 3'-end 2'-deoxyribonucleotide-(2,3-dehydro-2,3-deoxyribose 5'-phosphate)-DNA + a 5'-end 5'-phospho-2'-deoxyribonucleoside-DNA + H(+). Involved in base excision repair of DNA damaged by oxidation or by mutagenic agents. Acts as a DNA glycosylase that recognizes and removes damaged bases. Has a preference for oxidized purines, such as 7,8-dihydro-8-oxoguanine (8-oxoG). Has AP (apurinic/apyrimidinic) lyase activity and introduces nicks in the DNA strand. Cleaves the DNA backbone by beta-delta elimination to generate a single-strand break at the site of the removed base with both 3'- and 5'-phosphates. The protein is Formamidopyrimidine-DNA glycosylase of Actinobacillus pleuropneumoniae serotype 3 (strain JL03).